The sequence spans 655 residues: T-lymphocyte surface antigen Ly-9 (655 aa).

The N-terminal stretch at 1–47 (MVAPKSHTDDWAPGPFSSKPQRSQLQIFSSVLQTSLLFLLMGLRASG) is a signal peptide. One can recognise an Ig-like V-type 1 domain in the interval 48–158 (KDSAPTVVSG…FVYEQLQEPQ (111 aa)). Residues 48-454 (KDSAPTVVSG…ICSGPERNTK (407 aa)) are Extracellular-facing. N-linked (GlcNAc...) asparagine glycans are attached at residues Asn-68, Asn-95, Asn-120, Asn-169, and Asn-173. Residues 159 to 235 (VTMKSVKVSE…NPVSQRSSLP (77 aa)) enclose the Ig-like C2-type 1 domain. 2 cysteine pairs are disulfide-bonded: Cys-172-Cys-242 and Cys-178-Cys-222. The 113-residue stretch at 251 to 363 (GTTGETVVGV…LLIYRRLRKP (113 aa)) folds into the Ig-like V-type 2 domain. Asn-285, Asn-413, and Asn-424 each carry an N-linked (GlcNAc...) asparagine glycan. Residues 364 to 452 (KITWSLRHSE…ENICSGPERN (89 aa)) enclose the Ig-like C2-type 2 domain. Intrachain disulfides connect Cys-377–Cys-446 and Cys-383–Cys-427. The chain crosses the membrane as a helical span at residues 455-476 (LWIGLFLMVCLLCVGIFSWCIW). Topologically, residues 477 to 655 (KRKGRCSVPA…PESPTYENFT (179 aa)) are cytoplasmic. Residues 521 to 556 (PLRPARQQPTPTSDSSSDSNLTTEEDEDRPEVHKPI) are disordered. Residues 530-542 (TPTSDSSSDSNLT) show a composition bias toward low complexity. Short sequence motifs (ITSM) lie at residues 601-606 (TMYAQV) and 624-629 (TIYCSI). Phosphotyrosine is present on Tyr-603. The disordered stretch occupies residues 633 to 655 (QVVPPPQQNDLEIPESPTYENFT).

Interacts with SH2D1A, SH2D1B and INPP5D. Interacts (via phosphorylated cytoplasmic domain) with PTPN11; the interaction is blocked by SH2D1A. In terms of tissue distribution, increased surface expression on T-cells of systemic lupus erythematosus (SLE) patients.

It is found in the membrane. Its subcellular location is the cell membrane. Its function is as follows. Self-ligand receptor of the signaling lymphocytic activation molecule (SLAM) family. SLAM receptors triggered by homo- or heterotypic cell-cell interactions are modulating the activation and differentiation of a wide variety of immune cells and thus are involved in the regulation and interconnection of both innate and adaptive immune response. Activities are controlled by presence or absence of small cytoplasmic adapter proteins, SH2D1A/SAP and/or SH2D1B/EAT-2. May participate in adhesion reactions between T lymphocytes and accessory cells by homophilic interaction. Promotes T-cell differentiation into a helper T-cell Th17 phenotype leading to increased IL-17 secretion; the costimulatory activity requires SH2D1A. Promotes recruitment of RORC to the IL-17 promoter. May be involved in the maintenance of peripheral cell tolerance by serving as a negative regulator of the immune response. May disable autoantibody responses and inhibit IFN-gamma secretion by CD4(+) T-cells. May negatively regulate the size of thymic innate CD8(+) T-cells and the development of invariant natural killer T (iNKT) cells. The protein is T-lymphocyte surface antigen Ly-9 (LY9) of Homo sapiens (Human).